The sequence spans 523 residues: MAVFLRRFLWLISFTLVLTDDNSVENKFYIAGVVEYRPTFMGGTSEQLLQANLAGYLEIMASGNGTTDIIVFPEATLNSVITLTAVPKFTEQSLCEEQGDDDPEIAPFLRSLACAAREYGTYLVVNVKERVSEQCTSDETCSSRGYSIHNTNVVFDRQGAVISRYRKWNLYLEPSTNRTESPEIATFTTDFNVTFGHFICFDMLFYTPAQDLVEQLGIRHVIVTKMFNSELPFLTASQFQQGWAWANRVNLLASGGSLPQGGISGSGIYAGQQGALARLMITDELVGQRKLLLAKVPLDPEEPIATDEILEPEIMTPVKLKLLQQPELKNFTTWELPMVRGSSVDKRICQEDLCCEFRVTWTLEDTQPEYNYRLGVWVGQRRYEEEQYSAIRLCGLFACKGASVESCGLVSEEEVHLQDHRVVFTDLQILGEFVRRPRRLILPSTLSSSSFYALQPSQLAWSMEELANVTRIKMELRQPHSQLMTFAIYGNYFDEYANGGAGRLGTLLFLLITPLIMMHLFRE.

The N-terminal stretch at 1–19 (MAVFLRRFLWLISFTLVLT) is a signal peptide. The CN hydrolase domain occupies 29-298 (YIAGVVEYRP…RKLLLAKVPL (270 aa)). Asparagine 64 carries an N-linked (GlcNAc...) asparagine glycan. The Proton acceptor role is filled by glutamate 74. The active-site Proton donor is the lysine 167. Residues asparagine 177 and asparagine 192 are each glycosylated (N-linked (GlcNAc...) asparagine). Cysteine 200 acts as the Nucleophile in catalysis. Residues asparagine 330 and asparagine 468 are each glycosylated (N-linked (GlcNAc...) asparagine). Asparagine 498 carries GPI-anchor amidated asparagine lipidation. Residues 499 to 523 (GGAGRLGTLLFLLITPLIMMHLFRE) constitute a propeptide, removed in mature form.

It belongs to the carbon-nitrogen hydrolase superfamily. BTD/VNN family. Expressed in third instar larvae.

It is found in the cell membrane. This Drosophila melanogaster (Fruit fly) protein is Vanin-like protein 3.